The chain runs to 823 residues: Lon protease (823 aa).

Positions 51-246 constitute a Lon N-terminal domain; sequence IPILPLRNMV…RLLFILNREY (196 aa). 397-404 contributes to the ATP binding site; sequence GPPGVGKT. A Lon proteolytic domain is found at 633–815; the sequence is NDYAGVVTGL…QQVVDLALLR (183 aa). Residues Ser-721 and Lys-764 contribute to the active site.

It belongs to the peptidase S16 family. As to quaternary structure, homohexamer. Organized in a ring with a central cavity.

Its subcellular location is the cytoplasm. It carries out the reaction Hydrolysis of proteins in presence of ATP.. In terms of biological role, ATP-dependent serine protease that mediates the selective degradation of mutant and abnormal proteins as well as certain short-lived regulatory proteins. Required for cellular homeostasis and for survival from DNA damage and developmental changes induced by stress. Degrades polypeptides processively to yield small peptide fragments that are 5 to 10 amino acids long. Binds to DNA in a double-stranded, site-specific manner. This is Lon protease from Parabacteroides distasonis (strain ATCC 8503 / DSM 20701 / CIP 104284 / JCM 5825 / NCTC 11152).